Consider the following 356-residue polypeptide: Inositol phosphoceramide mannosyltransferase 3 (356 aa).

The chain crosses the membrane as a helical span at residues 4–24 (ILFYFFFFLTLILSATVYLFG). Residues Asn52 and Asn146 are each glycosylated (N-linked (GlcNAc...) asparagine). 2 helical membrane passes run 197–217 (FPYLTVMYSTGPLFLSIIWSA) and 269–289 (WAIFTFLGFLTFFIVVYFIFG). Ser307, Ser353, and Ser355 each carry phosphoserine.

The protein belongs to the glycosyltransferase 32 family.

It localises to the endoplasmic reticulum membrane. The protein localises to the golgi apparatus. Its subcellular location is the cis-Golgi network membrane. It is found in the trans-Golgi network membrane. In terms of biological role, with imt1 and imt2, is required for the synthesis of mannosylinositol phosphoceramide (MIPC). Catalyzes the addition of mannosyl to inositol phosphoceramide (IPC). MIPC is essential for cell morphology, cell-surface distribution of ergosterol, localization for plasma-membrane transporters, and lipid-raft-mediated endocytosis of plasma membrane proteins to the vacuole. This is Inositol phosphoceramide mannosyltransferase 3 from Schizosaccharomyces pombe (strain 972 / ATCC 24843) (Fission yeast).